The following is a 227-amino-acid chain: Threonine--tRNA ligase (227 aa).

A catalytic region spans residues 1 to 120 (DIELKLSTRP…LIEHYEGAFP (120 aa)).

It belongs to the class-II aminoacyl-tRNA synthetase family. As to quaternary structure, homodimer.

The protein resides in the cytoplasm. It catalyses the reaction tRNA(Thr) + L-threonine + ATP = L-threonyl-tRNA(Thr) + AMP + diphosphate + H(+). Catalyzes the attachment of threonine to tRNA(Thr) in a two-step reaction: L-threonine is first activated by ATP to form Thr-AMP and then transferred to the acceptor end of tRNA(Thr). Also edits incorrectly charged L-seryl-tRNA(Thr). The chain is Threonine--tRNA ligase from Pseudomonas syringae pv. syringae.